Here is a 767-residue protein sequence, read N- to C-terminus: Polyribonucleotide nucleotidyltransferase (767 aa).

Mg(2+)-binding residues include D509 and D515. The 60-residue stretch at 575-634 folds into the KH domain; sequence PRILTVKVPIDKIGEVIGPKGKMINSIQDETGAEITIEDDGTIYIGATDGPSAEAARDAI. Residues 646 to 718 form the S1 motif domain; that stretch reads GERYLGTVVK…ERGKLSLVPV (73 aa). The disordered stretch occupies residues 725-767; it reads AVAAPNGGESPNGAKKTDASGNGAKQPRRRRRTRSSSRSSENT. Residues 750 to 759 are compositionally biased toward basic residues; sequence QPRRRRRTRS.

It belongs to the polyribonucleotide nucleotidyltransferase family. Mg(2+) serves as cofactor.

The protein localises to the cytoplasm. The catalysed reaction is RNA(n+1) + phosphate = RNA(n) + a ribonucleoside 5'-diphosphate. Involved in mRNA degradation. Catalyzes the phosphorolysis of single-stranded polyribonucleotides processively in the 3'- to 5'-direction. This Thermobifida fusca (strain YX) protein is Polyribonucleotide nucleotidyltransferase.